Reading from the N-terminus, the 627-residue chain is MACPF domain-containing protein At1g14780 (627 aa).

The MACPF domain maps to 1-339; that stretch reads MSRDGGDVIE…PPLMDLQYFL (339 aa).

It belongs to the complement C6/C7/C8/C9 (TC 1.C.39) family.

Negatively controls the salicylic acid (SA)-mediated pathway of programmed cell death in plant immunity. This is MACPF domain-containing protein At1g14780 from Arabidopsis thaliana (Mouse-ear cress).